A 148-amino-acid polypeptide reads, in one-letter code: Insoluble matrix shell protein 1 (148 aa).

The interval 105–128 (KSGRTEARNTDDSGDPIIDPRTAD) is disordered.

As to expression, component of the acid-insoluble organic matrix of the calcified shell.

It localises to the secreted. This is Insoluble matrix shell protein 1 from Ruditapes philippinarum (Japanese carpet shell).